A 486-amino-acid chain; its full sequence is Bile acid receptor (486 aa).

K132 participates in a covalent cross-link: Glycyl lysine isopeptide (Lys-Gly) (interchain with G-Cter in SUMO1). The segment at residues 134–209 (DELCVVCGDR…MGMLAECMYT (76 aa)) is a DNA-binding region (nuclear receptor). The segment at 137 to 157 (CVVCGDRASGYHYNALTCEGC) adopts an NR C4-type zinc-finger fold. Phosphoserine; by PKC/PRKCA occurs at positions 145 and 164. K167 is subject to N6-acetyllysine; by EP300. An NR C4-type zinc finger spans residues 173 to 197 (CKNGGNCVMDMYMRRKCQECRLRKC). K220 bears the N6-methyllysine; by SETD7 mark. K227 carries the N6-acetyllysine; by EP300 modification. In terms of domain architecture, NR LBD spans 262-486 (DQQTLLHFIM…PLLCEIWDVQ (225 aa)). A Glycyl lysine isopeptide (Lys-Gly) (interchain with G-Cter in SUMO1) cross-link involves residue K289. Chenodeoxycholate-binding residues include R345, Y375, and Y383. Residue T456 is modified to Phosphothreonine; by PKC/PRKCZ. Residue H461 participates in chenodeoxycholate binding.

It belongs to the nuclear hormone receptor family. NR1 subfamily. In terms of assembly, heterodimer (via C-terminus) with RXRA (via DBD); the heterodimerization enhances the binding affinity for LXXLL motifs from coactivators. Binds DNA predominantly as a heterodimer with RXRA. After activation by agonist binding interacts with coactivators. Interacts with NCOA1, NCOA2, PPARGC1A, CARM1, SETD7, PRMT1, GPS2, SMARCA4 and MED1. Interacts with EP300 and SMARCD1. Interacts with XRCC5 and XRCC6; decreasing NR1H4/FXR transactivation activity towards ABCB11/BSEP. Interacts with PAGR1 and NCOA6; indicative for an association with an MLL2/MLL3 complex (ASCOM). In terms of processing, acetylated by EP300. Lys-227 as is the major acetylation site for EP300; the dynamicly regulated acetylation inhibits heterodimerization with RXRA and transactivation activity. Deacetylated by SIRT1. Post-translationally, methylation may increase transactivation of target genes. Phosphorylation by PKC/PRKCA increases transactivation activity by promoting association with PPARGC1A. In terms of processing, sumoylated upon ligand binding. In terms of tissue distribution, liver and hepatocyte-related cells express mainly FXRalpha1-type isoforms with isoform 3 and isoform 4 in approximately equal proportions. In intestine and kidney mainly FXRalpha2-type isoforms are expressed with isoform 1 and isoform 2 in approximately equal proportions. Expressed in pancreatic beta cells and macrophages.

It is found in the nucleus. Ligand-activated transcription factor. Receptor for bile acids (BAs) such as chenodeoxycholic acid (CDCA), lithocholic acid, deoxycholic acid (DCA) and allocholic acid (ACA). Plays a essential role in BA homeostasis through the regulation of genes involved in BA synthesis, conjugation and enterohepatic circulation. Also regulates lipid and glucose homeostasis and is involved innate immune response. The FXR-RXR heterodimer binds predominantly to farnesoid X receptor response elements (FXREs) containing two inverted repeats of the consensus sequence 5'-AGGTCA-3' in which the monomers are spaced by 1 nucleotide (IR-1) but also to tandem repeat DR1 sites with lower affinity, and can be activated by either FXR or RXR-specific ligands. It is proposed that monomeric nuclear receptors such as NR5A2/LRH-1 bound to coregulatory nuclear responsive element (NRE) halfsites located in close proximity to FXREs modulate transcriptional activity. In the liver activates transcription of the corepressor NR0B2 thereby indirectly inhibiting CYP7A1 and CYP8B1 (involved in BA synthesis) implicating at least in part histone demethylase KDM1A resulting in epigenomic repression, and SLC10A1/NTCP (involved in hepatic uptake of conjugated BAs). Activates transcription of the repressor MAFG (involved in regulation of BA synthesis). Activates transcription of SLC27A5/BACS and BAAT (involved in BA conjugation), ABCB11/BSEP (involved in bile salt export) by directly recruiting histone methyltransferase CARM1, and ABCC2/MRP2 (involved in secretion of conjugated BAs) and ABCB4 (involved in secretion of phosphatidylcholine in the small intestine). Activates transcription of SLC27A5/BACS and BAAT (involved in BA conjugation), ABCB11/BSEP (involved in bile salt export) by directly recruiting histone methyltransferase CARM1, and ABCC2/MRP2 (involved in secretion of conjugated BAs) and ABCB4 (involved in secretion of phosphatidylcholine in the small intestine). In the intestine activates FGF19 expression and secretion leading to hepatic CYP7A1 repression. The function also involves the coordinated induction of hepatic KLB/beta-klotho expression. Regulates transcription of liver UGT2B4 and SULT2A1 involved in BA detoxification; binding to the UGT2B4 promoter seems to imply a monomeric transactivation independent of RXRA. Modulates lipid homeostasis by activating liver NR0B2/SHP-mediated repression of SREBF1 (involved in de novo lipogenesis), expression of PLTP (involved in HDL formation), SCARB1 (involved in HDL hepatic uptake), APOE, APOC1, APOC4, PPARA (involved in beta-oxidation of fatty acids), VLDLR and SDC1 (involved in the hepatic uptake of LDL and IDL remnants), and inhibiting expression of MTTP (involved in VLDL assembly. Increases expression of APOC2 (promoting lipoprotein lipase activity implicated in triglyceride clearance). Transrepresses APOA1 involving a monomeric competition with NR2A1 for binding to a DR1 element. Also reduces triglyceride clearance by inhibiting expression of ANGPTL3 and APOC3 (both involved in inhibition of lipoprotein lipase). Involved in glucose homeostasis by modulating hepatic gluconeogenesis through activation of NR0B2/SHP-mediated repression of respective genes. Modulates glycogen synthesis (inducing phosphorylation of glycogen synthase kinase-3). Modulates glucose-stimulated insulin secretion and is involved in insulin resistance. Involved in intestinal innate immunity. Plays a role in protecting the distal small intestine against bacterial overgrowth and preservation of the epithelial barrier. Down-regulates inflammatory cytokine expression in several types of immune cells including macrophages and mononuclear cells. Mediates trans-repression of TLR4-induced cytokine expression; the function seems to require its sumoylation and prevents N-CoR nuclear receptor corepressor clearance from target genes such as IL1B and NOS2. Involved in the TLR9-mediated protective mechanism in intestinal inflammation. Plays an anti-inflammatory role in liver inflammation; proposed to inhibit pro-inflammatory (but not antiapoptotic) NF-kappa-B signaling). Functionally, promotes transcriptional activation of target genes NR0B2/SHP (inducible by unconjugated CDCA), SLC51B/OSTB (inducible by unconjugated CDCA and DCA) and FABP6/IBAP; low activity for ABCB11/BSEP (inducible by unconjugated CDCA, DCA and ACA); not inducible by taurine- and glycine-amidated CDCA. In terms of biological role, promotes transcriptional activation of target genes ABCB11/BSEP (inducible by unconjugated CDCA, DCA and ACA), NR0B2/SHP (inducible by unconjugated CDCA DCA and ACA), SLC51B/OSTB (inducible by unconjugated CDCA and DCA) and FABP6/IBAP; not inducible by taurine- and glycine-amidated CDCA. Its function is as follows. Promotes transcriptional activation of target genes NR0B2/SHP (inducible by unconjugated CDCA), SLC51B/OSTB (inducible by unconjugated CDCA and DCA) and IBAP; low activity for ABCB11/BSEP (inducible by unconjugated CDCA, DCA and ACA); not inducible by taurine- and glycine-amidated CDCA. Promotes transcriptional activation of target genes ABCB11/BSEP (inducible by unconjugated CDCA, ACA and DCA), NR0B2/SHP (inducible by unconjugated CDCA, ACA and DCA), SLC51B/OSTB (inducible by unconjugated CDCA and DCA) and FABP6/IBAP; most efficient isoform compared to isoforms 1 to 3; not inducible by taurine- and glycine-amidated CDCA. In Homo sapiens (Human), this protein is Bile acid receptor (NR1H4).